A 456-amino-acid chain; its full sequence is Bifunctional protein GlmU (456 aa).

The tract at residues 1 to 229 is pyrophosphorylase; that stretch reads MLNNAMSVVI…LSEVEGVNNR (229 aa). Residues 11 to 14, Lys25, Gln76, 81 to 82, 103 to 105, Gly140, Glu154, Asn169, and Asn227 contribute to the UDP-N-acetyl-alpha-D-glucosamine site; these read LAAG, GT, and YGD. Asp105 serves as a coordination point for Mg(2+). Asn227 lines the Mg(2+) pocket. Positions 230–250 are linker; it reads LQLSRLERVYQSEQAEKLLLA. The N-acetyltransferase stretch occupies residues 251 to 456; sequence GVMLRDPARF…EGWRRPVKKK (206 aa). UDP-N-acetyl-alpha-D-glucosamine contacts are provided by Arg333 and Lys351. Catalysis depends on His363, which acts as the Proton acceptor. UDP-N-acetyl-alpha-D-glucosamine is bound by residues Tyr366 and Asn377. Residues Ala380, 386 to 387, Ser405, Ala423, and Arg440 contribute to the acetyl-CoA site; that span reads NY.

This sequence in the N-terminal section; belongs to the N-acetylglucosamine-1-phosphate uridyltransferase family. It in the C-terminal section; belongs to the transferase hexapeptide repeat family. In terms of assembly, homotrimer. Mg(2+) serves as cofactor.

It is found in the cytoplasm. It carries out the reaction alpha-D-glucosamine 1-phosphate + acetyl-CoA = N-acetyl-alpha-D-glucosamine 1-phosphate + CoA + H(+). It catalyses the reaction N-acetyl-alpha-D-glucosamine 1-phosphate + UTP + H(+) = UDP-N-acetyl-alpha-D-glucosamine + diphosphate. The protein operates within nucleotide-sugar biosynthesis; UDP-N-acetyl-alpha-D-glucosamine biosynthesis; N-acetyl-alpha-D-glucosamine 1-phosphate from alpha-D-glucosamine 6-phosphate (route II): step 2/2. Its pathway is nucleotide-sugar biosynthesis; UDP-N-acetyl-alpha-D-glucosamine biosynthesis; UDP-N-acetyl-alpha-D-glucosamine from N-acetyl-alpha-D-glucosamine 1-phosphate: step 1/1. It participates in bacterial outer membrane biogenesis; LPS lipid A biosynthesis. Its function is as follows. Catalyzes the last two sequential reactions in the de novo biosynthetic pathway for UDP-N-acetylglucosamine (UDP-GlcNAc). The C-terminal domain catalyzes the transfer of acetyl group from acetyl coenzyme A to glucosamine-1-phosphate (GlcN-1-P) to produce N-acetylglucosamine-1-phosphate (GlcNAc-1-P), which is converted into UDP-GlcNAc by the transfer of uridine 5-monophosphate (from uridine 5-triphosphate), a reaction catalyzed by the N-terminal domain. The chain is Bifunctional protein GlmU from Shigella boydii serotype 18 (strain CDC 3083-94 / BS512).